The primary structure comprises 313 residues: MVSYLDFEKPVAELQTRIAELRKATSDEMDLDREISDLEVKVQKLLRDTYAHLTPWQKTQVARHPERPHFHDYISALCEEFIPLAGDRLFGEDEAIIGGLARIDGQRVMIIGQEKGNDTASRLKHNFGMARPEGYRKAIRLMKLADRFGLPVITLVDTSGAFPGIDAEERGQAEAIARSTETCLSLGVPLISVIVGEGGSGGAIAIAAANRLLMFEHAVYSVISPEGCASILWRDAGKASDAATAMKLTATDLYGLGIVDRIVLEPVGGAHRDPKTAIDALKMALLQELAFLKPMDRDALRSMRRKKFLDIGG.

The CoA carboxyltransferase C-terminal domain occupies 30–291 (DLDREISDLE…KMALLQELAF (262 aa)).

This sequence belongs to the AccA family. In terms of assembly, acetyl-CoA carboxylase is a heterohexamer composed of biotin carboxyl carrier protein (AccB), biotin carboxylase (AccC) and two subunits each of ACCase subunit alpha (AccA) and ACCase subunit beta (AccD).

The protein resides in the cytoplasm. It catalyses the reaction N(6)-carboxybiotinyl-L-lysyl-[protein] + acetyl-CoA = N(6)-biotinyl-L-lysyl-[protein] + malonyl-CoA. It participates in lipid metabolism; malonyl-CoA biosynthesis; malonyl-CoA from acetyl-CoA: step 1/1. Functionally, component of the acetyl coenzyme A carboxylase (ACC) complex. First, biotin carboxylase catalyzes the carboxylation of biotin on its carrier protein (BCCP) and then the CO(2) group is transferred by the carboxyltransferase to acetyl-CoA to form malonyl-CoA. The polypeptide is Acetyl-coenzyme A carboxylase carboxyl transferase subunit alpha (Zymomonas mobilis subsp. mobilis (strain ATCC 31821 / ZM4 / CP4)).